Here is a 737-residue protein sequence, read N- to C-terminus: MPRYKTVEQVLSLMKDVTRVRNIGIIAHVDHGKTTTSDTLLAASGIISQKVAGEALALDYLSVEQQRGITVKAANISLYHEIDGKGYVINLIDTPGHVDFSGRVTRSLRVLDGSIVVIDAVEGIMTQTETVLRQSLEERVRPILFINKVDRLIKELKLSSQEIQKRLIDLIIEVNNLIETYGEPEFKDQWKIKPELGNVVFGSAKDKWGFSVPMAGKRGVKFSDVVNAYTSGDKAKIEELASKVPIHEALLDAVIKFVPNPRDSQKYRIPKIWKGDLDSEIAKAMINADPNGPIVMMINDMKVDPHAGLVATGRVFSGTLRAGEEVWLVNAKRQQRILQVSLYMGAIRELAEEIPVGNIAAALGMDAARSGETGVDIRFKDSVLGSFEKLHYISEPVVTISVEPRNPKDLTKMIDALRKLSIEDSNLVVKINEETGEYLLSGMGFLHLEVSLQLLKENYGLDVVTTPPIVVYRESIRNKSQVFEGKSPNKHNKLYISVEPLNNQTIDLIANGTIKEDMDNKEMAKILRDQAEWDYDEAKKIVAIDENINVFIDATSGVQHLREIMDTLLQGFRLAMKEGPLAFEPVRGVKVVLHDAVVHEDPAHRGPAQLYPAVRNAIFAGILTSKPTLLEPLQKLDIRIPMEYLGNVTAVITRKRGKVINVVQTGNVARVYAEIPVGESFELASELRASSAGRAFWGTEFSRWAPVPDSILVDLIMKIRERKGKPKQLPKVEDFIS.

The tr-type G domain occupies 18–262 (TRVRNIGIIA…AVIKFVPNPR (245 aa)). GTP is bound by residues 27–34 (AHVDHGKT), 93–97 (DTPGH), and 147–150 (NKVD). Diphthamide is present on His-604.

This sequence belongs to the TRAFAC class translation factor GTPase superfamily. Classic translation factor GTPase family. EF-G/EF-2 subfamily.

The protein resides in the cytoplasm. Catalyzes the GTP-dependent ribosomal translocation step during translation elongation. During this step, the ribosome changes from the pre-translocational (PRE) to the post-translocational (POST) state as the newly formed A-site-bound peptidyl-tRNA and P-site-bound deacylated tRNA move to the P and E sites, respectively. Catalyzes the coordinated movement of the two tRNA molecules, the mRNA and conformational changes in the ribosome. The protein is Elongation factor 2 (fusA) of Sulfolobus acidocaldarius (strain ATCC 33909 / DSM 639 / JCM 8929 / NBRC 15157 / NCIMB 11770).